We begin with the raw amino-acid sequence, 190 residues long: Protein A52 (190 aa).

It belongs to the orthopoxvirus A52R protein family. Interacts with host TRAF6 and IRAK2.

Its function is as follows. Bcl-2-like protein which targets host toll-like receptor signaling complexes to suppress innate immune response. Interacts with host TRAF6 to activate p38 and subsequently induce the expression of several cytokines such as IL-10. Also associates with host IRAK2 to inhibit NF-kappa-B signaling. The protein is Protein A52 of Homo sapiens (Human).